Reading from the N-terminus, the 166-residue chain is Pyruvoyl-dependent arginine decarboxylase (166 aa).

Ser-45 carries the post-translational modification Pyruvic acid (Ser).

It belongs to the PdaD family. Pyruvate serves as cofactor.

It catalyses the reaction L-arginine + H(+) = agmatine + CO2. The chain is Pyruvoyl-dependent arginine decarboxylase from Methanocella arvoryzae (strain DSM 22066 / NBRC 105507 / MRE50).